The sequence spans 66 residues: Photosystem II reaction center protein J (66 aa).

The interval 1-23 is disordered; sequence MSGNKSPFPDGRIPDRLPDGRPA. A helical transmembrane segment spans residues 37–57; sequence LWLVATAGGMAVLFVVGLFFY.

Belongs to the PsbJ family. In terms of assembly, PSII is composed of 1 copy each of membrane proteins PsbA, PsbB, PsbC, PsbD, PsbE, PsbF, PsbH, PsbI, PsbJ, PsbK, PsbL, PsbM, PsbT, PsbX, PsbY, PsbZ, Psb30/Ycf12, peripheral proteins PsbO, CyanoQ (PsbQ), PsbU, PsbV and a large number of cofactors. It forms dimeric complexes.

It localises to the cellular thylakoid membrane. Its function is as follows. One of the components of the core complex of photosystem II (PSII). PSII is a light-driven water:plastoquinone oxidoreductase that uses light energy to abstract electrons from H(2)O, generating O(2) and a proton gradient subsequently used for ATP formation. It consists of a core antenna complex that captures photons, and an electron transfer chain that converts photonic excitation into a charge separation. The chain is Photosystem II reaction center protein J from Parasynechococcus marenigrum (strain WH8102).